We begin with the raw amino-acid sequence, 313 residues long: Biotin synthase (313 aa).

The region spanning 28-258 (NFGNDIELCS…LFPQARLRLS (231 aa)) is the Radical SAM core domain. Positions 46, 50, and 53 each coordinate [4Fe-4S] cluster. 4 residues coordinate [2Fe-2S] cluster: Cys90, Cys121, Cys181, and Arg256.

This sequence belongs to the radical SAM superfamily. Biotin synthase family. As to quaternary structure, homodimer. It depends on [4Fe-4S] cluster as a cofactor. The cofactor is [2Fe-2S] cluster.

It carries out the reaction (4R,5S)-dethiobiotin + (sulfur carrier)-SH + 2 reduced [2Fe-2S]-[ferredoxin] + 2 S-adenosyl-L-methionine = (sulfur carrier)-H + biotin + 2 5'-deoxyadenosine + 2 L-methionine + 2 oxidized [2Fe-2S]-[ferredoxin]. It functions in the pathway cofactor biosynthesis; biotin biosynthesis; biotin from 7,8-diaminononanoate: step 2/2. Functionally, catalyzes the conversion of dethiobiotin (DTB) to biotin by the insertion of a sulfur atom into dethiobiotin via a radical-based mechanism. This Francisella tularensis subsp. holarctica (strain FTNF002-00 / FTA) protein is Biotin synthase.